We begin with the raw amino-acid sequence, 295 residues long: Zinc finger C2H2 protein ECU08_0560 (295 aa).

2 consecutive C2H2-type zinc fingers follow at residues 219–243 and 249–273; these read FVCTYNDCKRAFKRYEHLKRHNLMH and HKCRFPGCSKAFSRSDNLSQHYKVH.

The sequence is that of Zinc finger C2H2 protein ECU08_0560 from Encephalitozoon cuniculi (strain GB-M1) (Microsporidian parasite).